Here is an 89-residue protein sequence, read N- to C-terminus: uncharacterized protein (89 aa).

Residues 28-50 (LYLDLGFSALLFYNSNLLFSFIL) traverse the membrane as a helical segment.

It localises to the membrane. This is an uncharacterized protein from Archaeoglobus fulgidus (strain ATCC 49558 / DSM 4304 / JCM 9628 / NBRC 100126 / VC-16).